Consider the following 207-residue polypeptide: Putative 3-methyladenine DNA glycosylase (207 aa).

Belongs to the DNA glycosylase MPG family.

The protein is Putative 3-methyladenine DNA glycosylase of Listeria monocytogenes serotype 4a (strain HCC23).